The following is a 347-amino-acid chain: 4-hydroxy-3-methylbut-2-en-1-yl diphosphate synthase (flavodoxin) (347 aa).

[4Fe-4S] cluster-binding residues include cysteine 259, cysteine 262, cysteine 294, and glutamate 301.

It belongs to the IspG family. [4Fe-4S] cluster is required as a cofactor.

The catalysed reaction is (2E)-4-hydroxy-3-methylbut-2-enyl diphosphate + oxidized [flavodoxin] + H2O + 2 H(+) = 2-C-methyl-D-erythritol 2,4-cyclic diphosphate + reduced [flavodoxin]. It participates in isoprenoid biosynthesis; isopentenyl diphosphate biosynthesis via DXP pathway; isopentenyl diphosphate from 1-deoxy-D-xylulose 5-phosphate: step 5/6. Functionally, converts 2C-methyl-D-erythritol 2,4-cyclodiphosphate (ME-2,4cPP) into 1-hydroxy-2-methyl-2-(E)-butenyl 4-diphosphate. This chain is 4-hydroxy-3-methylbut-2-en-1-yl diphosphate synthase (flavodoxin), found in Caldicellulosiruptor saccharolyticus (strain ATCC 43494 / DSM 8903 / Tp8T 6331).